An 871-amino-acid polypeptide reads, in one-letter code: Envelope glycoprotein gp160 (871 aa).

An N-terminal signal peptide occupies residues 1 to 21 (MKNLIGITLILIITILGIGFS). The Extracellular segment spans residues 22–684 (TYYTTVFYGV…DITQWLWYIK (663 aa)). A disulfide bridge links Cys-43 with Cys-63. N-linked (GlcNAc...) asparagine; by host glycosylation is found at Asn-77, Asn-124, Asn-127, Asn-142, Asn-153, Asn-157, Asn-185, Asn-194, Asn-229, Asn-238, Asn-259, Asn-273, Asn-285, Asn-289, Asn-297, Asn-329, Asn-345, Asn-352, Asn-384, Asn-387, Asn-395, Asn-398, Asn-438, Asn-451, and Asn-496. Cystine bridges form between Cys-108/Cys-202, Cys-115/Cys-193, Cys-120/Cys-154, Cys-215/Cys-244, and Cys-225/Cys-236. The V1 stretch occupies residues 120-153 (CTMTNTTNKTLNSATTTLTPTVNLSSIPNYEVYN). Positions 154–193 (CSFNQTTEFRDKKKQIYSLFYREDIVKEDGNNNSYYLHNC) are V2. The tract at residues 292–325 (CERTGNNTRGQVQIGPGMTFYNIENVVGDTRKAY) is V3. Cys-292 and Cys-326 are disulfide-bonded. Disulfide bonds link Cys-376/Cys-435 and Cys-383/Cys-408. The segment at 383–408 (CNLTNWTNTWTANRTNNTHGTLVAPC) is V4. Positions 451–458 (NNSYTPQF) are V5. Residues 502 to 522 (RDVGIGLLFLGFLSAAGSTMG) are fusion peptide. The interval 567–583 (LQARMLAVEKYIRDQQL) is immunosuppression. N-linked (GlcNAc...) asparagine; by host glycosylation is found at Asn-602, Asn-613, Asn-626, and Asn-638. A coiled-coil region spans residues 645 to 668 (SLLEKAQTQQEKNKQELLELDKWS). The MPER; binding to GalCer stretch occupies residues 663–684 (ELDKWSSLWDWFDITQWLWYIK). Residues 685–705 (IAIIIVAGLVGLRILMFIVNV) form a helical membrane-spanning segment. Topologically, residues 706–871 (VKQVRQGYTP…IRQGLELALN (166 aa)) are cytoplasmic. Residues 713 to 716 (YTPL) carry the YXXL motif; contains endocytosis signal motif.

In terms of assembly, the mature envelope protein (Env) consists of a homotrimer of non-covalently associated gp120-gp41 heterodimers. The resulting complex protrudes from the virus surface as a spike. Interacts with host CD4 and CCR5. Gp120 also interacts with the C-type lectins CD209/DC-SIGN and CLEC4M/DC-SIGNR (collectively referred to as DC-SIGN(R)). The mature envelope protein (Env) consists of a homotrimer of non-covalently associated gp120-gp41 heterodimers. The resulting complex protrudes from the virus surface as a spike. In terms of processing, specific enzymatic cleavages in vivo yield mature proteins. Envelope glycoproteins are synthesized as an inactive precursor that is heavily N-glycosylated and processed likely by host cell furin in the Golgi to yield the mature SU and TM proteins. The cleavage site between SU and TM requires the minimal sequence [KR]-X-[KR]-R.

It is found in the virion membrane. The protein resides in the host cell membrane. It localises to the host endosome membrane. Functionally, the surface protein gp120 (SU) attaches the virus to the host lymphoid cell by binding to the primary receptor CD4. This interaction induces a structural rearrangement creating a high affinity binding site for a chemokine coreceptor like CCR5. This peculiar 2 stage receptor-interaction strategy allows gp120 to maintain the highly conserved coreceptor-binding site in a cryptic conformation, protected from neutralizing antibodies. These changes are transmitted to the transmembrane protein gp41 and are thought to activate its fusogenic potential by unmasking its fusion peptide. In terms of biological role, surface protein gp120 (SU) may target the virus to gut-associated lymphoid tissue (GALT) by binding host ITGA4/ITGB7 (alpha-4/beta-7 integrins), a complex that mediates T-cell migration to the GALT. Interaction between gp120 and ITGA4/ITGB7 would allow the virus to enter GALT early in the infection, infecting and killing most of GALT's resting CD4+ T-cells. This T-cell depletion is believed to be the major insult to the host immune system leading to AIDS. Its function is as follows. The surface protein gp120 is a ligand for CD209/DC-SIGN and CLEC4M/DC-SIGNR, which are respectively found on dendritic cells (DCs), and on endothelial cells of liver sinusoids and lymph node sinuses. These interactions allow capture of viral particles at mucosal surfaces by these cells and subsequent transmission to permissive cells. DCs are professional antigen presenting cells, critical for host immunity by inducing specific immune responses against a broad variety of pathogens. They act as sentinels in various tissues where they take up antigen, process it, and present it to T-cells following migration to lymphoid organs. SIV subverts the migration properties of dendritic cells to gain access to CD4+ T-cells in lymph nodes. Virus transmission to permissive T-cells occurs either in trans (without DCs infection, through viral capture and transmission), or in cis (following DCs productive infection, through the usual CD4-gp120 interaction), thereby inducing a robust infection. In trans infection, bound virions remain infectious over days and it is proposed that they are not degraded, but protected in non-lysosomal acidic organelles within the DCs close to the cell membrane thus contributing to the viral infectious potential during DCs' migration from the periphery to the lymphoid tissues. On arrival at lymphoid tissues, intact virions recycle back to DCs' cell surface allowing virus transmission to CD4+ T-cells. Virion capture also seems to lead to MHC-II-restricted viral antigen presentation, and probably to the activation of SIV-specific CD4+ cells. The transmembrane protein gp41 (TM) acts as a class I viral fusion protein. Under the current model, the protein has at least 3 conformational states: pre-fusion native state, pre-hairpin intermediate state, and post-fusion hairpin state. During fusion of viral and target intracellular membranes, the coiled coil regions (heptad repeats) assume a trimer-of-hairpins structure, positioning the fusion peptide in close proximity to the C-terminal region of the ectodomain. The formation of this structure appears to drive apposition and subsequent fusion of viral and target cell membranes. Complete fusion occurs in host cell endosomes. The virus undergoes clathrin-dependent internalization long before endosomal fusion, thus minimizing the surface exposure of conserved viral epitopes during fusion and reducing the efficacy of inhibitors targeting these epitopes. Membranes fusion leads to delivery of the nucleocapsid into the cytoplasm. Functionally, the envelope glycoprotein gp160 precursor down-modulates cell surface CD4 antigen by interacting with it in the endoplasmic reticulum and blocking its transport to the cell surface. In terms of biological role, the gp120-gp41 heterodimer allows rapid transcytosis of the virus through CD4 negative cells such as simple epithelial monolayers of the intestinal, rectal and endocervical epithelial barriers. Both gp120 and gp41 specifically recognize glycosphingolipids galactosyl-ceramide (GalCer) or 3' sulfo-galactosyl-ceramide (GalS) present in the lipid rafts structures of epithelial cells. Binding to these alternative receptors allows the rapid transcytosis of the virus through the epithelial cells. This transcytotic vesicle-mediated transport of virions from the apical side to the basolateral side of the epithelial cells does not involve infection of the cells themselves. The protein is Envelope glycoprotein gp160 of Simian immunodeficiency virus (isolate TAN1) (SIV-cpz).